The following is a 316-amino-acid chain: Acetyl-coenzyme A carboxylase carboxyl transferase subunit alpha (316 aa).

The 255-residue stretch at Arg39–Met293 folds into the CoA carboxyltransferase C-terminal domain.

It belongs to the AccA family. As to quaternary structure, acetyl-CoA carboxylase is a heterohexamer composed of biotin carboxyl carrier protein (AccB), biotin carboxylase (AccC) and two subunits each of ACCase subunit alpha (AccA) and ACCase subunit beta (AccD).

Its subcellular location is the cytoplasm. The catalysed reaction is N(6)-carboxybiotinyl-L-lysyl-[protein] + acetyl-CoA = N(6)-biotinyl-L-lysyl-[protein] + malonyl-CoA. The protein operates within lipid metabolism; malonyl-CoA biosynthesis; malonyl-CoA from acetyl-CoA: step 1/1. Its function is as follows. Component of the acetyl coenzyme A carboxylase (ACC) complex. First, biotin carboxylase catalyzes the carboxylation of biotin on its carrier protein (BCCP) and then the CO(2) group is transferred by the carboxyltransferase to acetyl-CoA to form malonyl-CoA. This chain is Acetyl-coenzyme A carboxylase carboxyl transferase subunit alpha, found in Pseudomonas aeruginosa (strain LESB58).